The primary structure comprises 647 residues: Acetyl-coenzyme A synthetase (647 aa).

CoA is bound by residues 192 to 195 (RGGR), T310, and N334. ATP is bound by residues 386-388 (GEP), 410-415 (DTWWQT), D499, and R514. Position 522 (S522) interacts with CoA. R525 lines the ATP pocket. Mg(2+)-binding residues include V536, H538, and V541. Residue R583 coordinates CoA. The residue at position 608 (K608) is an N6-acetyllysine.

The protein belongs to the ATP-dependent AMP-binding enzyme family. Requires Mg(2+) as cofactor. Post-translationally, acetylated. Deacetylation by the SIR2-homolog deacetylase activates the enzyme.

It catalyses the reaction acetate + ATP + CoA = acetyl-CoA + AMP + diphosphate. Functionally, catalyzes the conversion of acetate into acetyl-CoA (AcCoA), an essential intermediate at the junction of anabolic and catabolic pathways. AcsA undergoes a two-step reaction. In the first half reaction, AcsA combines acetate with ATP to form acetyl-adenylate (AcAMP) intermediate. In the second half reaction, it can then transfer the acetyl group from AcAMP to the sulfhydryl group of CoA, forming the product AcCoA. The chain is Acetyl-coenzyme A synthetase from Caulobacter vibrioides (strain ATCC 19089 / CIP 103742 / CB 15) (Caulobacter crescentus).